Consider the following 371-residue polypeptide: ETS-related transcription factor Elf-3 (371 aa).

The 87-residue stretch at 46–132 folds into the PNT domain; that stretch reads NPQMSLEGTE…AQLRDLTSSS (87 aa). Positions 137–145 match the 9aaTAD motif; that stretch reads SWIIELLEK. Residues 173–251 form a disordered region; sequence GQQASPYHPG…HGKRKRGRPR (79 aa). The segment covering 181 to 216 has biased composition (low complexity); the sequence is PGSCGAGAPSPGSSDVSTAGTGASRSSHSSDSGGSD. Basic and acidic residues predominate over residues 231-241; that stretch reads GFRDCKKGDPK. Over residues 242 to 251 the composition is skewed to basic residues; that stretch reads HGKRKRGRPR. The ETS DNA-binding region spans 273–355; the sequence is THLWEFIRDI…DGRRLVYKFG (83 aa).

It belongs to the ETS family. As to quaternary structure, interacts with TBP. Interacts with CREBBP and EP300; these act as transcriptional coactivators of ELF3 and positively modulate its function. Interacts with XRCC5/KU86 and XRCC6/KU70; these inhibit the ability of ELF3 to bind DNA and negatively modulate its transcriptional activity. Associated with CLND7 and POU2F3. Interacts with ZNF768. As to expression, expressed exclusively in tissues containing a high content of terminally differentiated epithelial cells including mammary gland, colon, trachea, kidney, prostate, uterus, stomach and skin.

The protein localises to the cytoplasm. It is found in the nucleus. Its function is as follows. Transcriptional activator that binds and transactivates ETS sequences containing the consensus nucleotide core sequence GGA[AT]. Acts synergistically with POU2F3 to transactivate the SPRR2A promoter and with RUNX1 to transactivate the ANGPT1 promoter. Also transactivates collagenase, CCL20, CLND7, FLG, KRT8, NOS2, PTGS2, SPRR2B, TGFBR2 and TGM3 promoters. Represses KRT4 promoter activity. Involved in mediating vascular inflammation. May play an important role in epithelial cell differentiation and tumorigenesis. May be a critical downstream effector of the ERBB2 signaling pathway. May be associated with mammary gland development and involution. Plays an important role in the regulation of transcription with TATA-less promoters in preimplantation embryos, which is essential in preimplantation development. In Homo sapiens (Human), this protein is ETS-related transcription factor Elf-3.